The primary structure comprises 96 residues: Small ribosomal subunit protein bS6 (96 aa).

This sequence belongs to the bacterial ribosomal protein bS6 family.

Its function is as follows. Binds together with bS18 to 16S ribosomal RNA. The protein is Small ribosomal subunit protein bS6 (rpsF) of Mycobacterium bovis (strain ATCC BAA-935 / AF2122/97).